The primary structure comprises 277 residues: Putative glucose-6-phosphate/phosphate-translocator-like protein 1 (277 aa).

5 helical membrane passes run 8–28, 46–66, 124–143, 153–173, and 230–250; these read VLPS…WWAL, LWLT…VSWV, MIGF…RNIF, VSVM…VTPF, and PLKH…FIYS.

Belongs to the TPT transporter family. GPT (TC 2.A.7.9) subfamily.

Its subcellular location is the membrane. The chain is Putative glucose-6-phosphate/phosphate-translocator-like protein 1 from Arabidopsis thaliana (Mouse-ear cress).